We begin with the raw amino-acid sequence, 210 residues long: Probable nicotinate-nucleotide adenylyltransferase (210 aa).

This sequence belongs to the NadD family.

The enzyme catalyses nicotinate beta-D-ribonucleotide + ATP + H(+) = deamido-NAD(+) + diphosphate. It participates in cofactor biosynthesis; NAD(+) biosynthesis; deamido-NAD(+) from nicotinate D-ribonucleotide: step 1/1. Catalyzes the reversible adenylation of nicotinate mononucleotide (NaMN) to nicotinic acid adenine dinucleotide (NaAD). This is Probable nicotinate-nucleotide adenylyltransferase from Streptococcus pyogenes serotype M18 (strain MGAS8232).